Consider the following 364-residue polypeptide: Probable dual-specificity RNA methyltransferase RlmN (364 aa).

The Proton acceptor role is filled by E106. One can recognise a Radical SAM core domain in the interval 112–350 (YPRRNTVCIS…SCTVRDTRGR (239 aa)). C119 and C356 are disulfide-bonded. 3 residues coordinate [4Fe-4S] cluster: C126, C130, and C133. Residues 177 to 178 (GE), S211, 234 to 236 (SLH), and N313 each bind S-adenosyl-L-methionine. C356 serves as the catalytic S-methylcysteine intermediate.

The protein belongs to the radical SAM superfamily. RlmN family. [4Fe-4S] cluster serves as cofactor.

It is found in the cytoplasm. The catalysed reaction is adenosine(2503) in 23S rRNA + 2 reduced [2Fe-2S]-[ferredoxin] + 2 S-adenosyl-L-methionine = 2-methyladenosine(2503) in 23S rRNA + 5'-deoxyadenosine + L-methionine + 2 oxidized [2Fe-2S]-[ferredoxin] + S-adenosyl-L-homocysteine. It carries out the reaction adenosine(37) in tRNA + 2 reduced [2Fe-2S]-[ferredoxin] + 2 S-adenosyl-L-methionine = 2-methyladenosine(37) in tRNA + 5'-deoxyadenosine + L-methionine + 2 oxidized [2Fe-2S]-[ferredoxin] + S-adenosyl-L-homocysteine. Specifically methylates position 2 of adenine 2503 in 23S rRNA and position 2 of adenine 37 in tRNAs. This is Probable dual-specificity RNA methyltransferase RlmN from Mycobacterium bovis (strain ATCC BAA-935 / AF2122/97).